Reading from the N-terminus, the 270-residue chain is tRNA pseudouridine synthase B (270 aa).

D49 functions as the Nucleophile in the catalytic mechanism.

Belongs to the pseudouridine synthase TruB family. Type 1 subfamily.

The catalysed reaction is uridine(55) in tRNA = pseudouridine(55) in tRNA. Functionally, responsible for synthesis of pseudouridine from uracil-55 in the psi GC loop of transfer RNAs. The chain is tRNA pseudouridine synthase B from Bartonella quintana (strain Toulouse) (Rochalimaea quintana).